Here is a 290-residue protein sequence, read N- to C-terminus: Microtubule-associated protein P320 (290 aa).

Repeats lie at residues 1–38 (SEYR…PIDP), 39–76 (SEYR…PIDP), 77–114 (SEYR…PIDP), 115–152 (SEYR…PIDP), 153–190 (SEYR…PIDP), 191–228 (SEYR…PIDP), 229–266 (SEYR…PIDP), and 267–290 (SEYR…DESH). A disordered region spans residues 251–290 (SHFLTTTHEAYKPIDPSEYRQKRTVGEEVTTDMRHVDESH). Basic and acidic residues predominate over residues 259-290 (EAYKPIDPSEYRQKRTVGEEVTTDMRHVDESH).

The protein resides in the cytoplasm. It is found in the cytoskeleton. In Trypanosoma brucei brucei, this protein is Microtubule-associated protein P320.